The primary structure comprises 514 residues: Peptide chain release factor 3 (514 aa).

The region spanning 8-268 (KKRRTFAIIS…TFLKFAPEPH (261 aa)) is the tr-type G domain. GTP-binding positions include 17-24 (SHPDAGKT), 85-89 (DTPGH), and 139-142 (NKLD).

Belongs to the TRAFAC class translation factor GTPase superfamily. Classic translation factor GTPase family. PrfC subfamily.

It localises to the cytoplasm. Its function is as follows. Increases the formation of ribosomal termination complexes and stimulates activities of RF-1 and RF-2. It binds guanine nucleotides and has strong preference for UGA stop codons. It may interact directly with the ribosome. The stimulation of RF-1 and RF-2 is significantly reduced by GTP and GDP, but not by GMP. This Streptococcus pneumoniae serotype 19F (strain G54) protein is Peptide chain release factor 3.